The sequence spans 173 residues: MDLVIGRVAKAHGVTGELVVEVRTDDPDARFVPGARLRGRAPRGGAERAFVVESVRPHGGRLLLRLDGVADRTAADALRGTVFLVDSADLPPIEEPDEYYDHQLEGLLVRTVDGVDVGTVAEVLHTAAGELLSVKTPEGAEILVPFVTAIVPRVSLADGLVEIDPPEGLLDLE.

The PRC barrel domain maps to 96-169 (PDEYYDHQLE…LVEIDPPEGL (74 aa)).

The protein belongs to the RimM family. In terms of assembly, binds ribosomal protein uS19.

Its subcellular location is the cytoplasm. Functionally, an accessory protein needed during the final step in the assembly of 30S ribosomal subunit, possibly for assembly of the head region. Essential for efficient processing of 16S rRNA. May be needed both before and after RbfA during the maturation of 16S rRNA. It has affinity for free ribosomal 30S subunits but not for 70S ribosomes. The polypeptide is Ribosome maturation factor RimM (Mycobacterium sp. (strain JLS)).